Consider the following 707-residue polypeptide: Protein kinase C theta type (707 aa).

Positions 1-107 constitute a C2 domain; sequence MSPFLRIGLS…KNNGRTEIWL (107 aa). At Tyr-90 the chain carries Phosphotyrosine; by LCK. Residues 159 to 209 form a Phorbol-ester/DAG-type 1 zinc finger; the sequence is CHEFTATFFPQPTFCSVCHEFVWGLNKQGYQCRQCNAAIHKKCIDKVIAKC. A Phosphothreonine; by autocatalysis modification is found at Thr-219. The Phorbol-ester/DAG-type 2 zinc finger occupies 231–281; the sequence is PHRFKVYNYKSPTFCEHCGTLLWGLARQGLKCDACGMNVHHRCQTKVANLC. The disordered stretch occupies residues 327 to 365; sequence ETRPPCVPTPGKREPQGISWDSPLDGSNKSAGPPEPEVS. A Phosphoserine modification is found at Ser-348. The region spanning 380–634 is the Protein kinase domain; the sequence is FILHKMLGKG…RGDIRQHPLF (255 aa). ATP-binding positions include 386–394 and Lys-409; that span reads LGKGSFGKV. Asp-504 acts as the Proton acceptor in catalysis. At Thr-538 the chain carries Phosphothreonine; by PDPK1. In terms of domain architecture, AGC-kinase C-terminal spans 635–706; it reads REINWEELER…INPGMETLIC (72 aa). Residue Ser-676 is modified to Phosphoserine; by autocatalysis. At Ser-685 the chain carries Phosphoserine. Ser-695 carries the post-translational modification Phosphoserine; by autocatalysis.

The protein belongs to the protein kinase superfamily. AGC Ser/Thr protein kinase family. PKC subfamily. As to quaternary structure, part of a membrane raft complex composed at least of BCL10, CARD11, MALT1 and IKBKB. Interacts with GLRX3 (via N-terminus). Interacts with ECT2. Interacts with CCDC88A/GIV; the interaction leads to phosphorylation of CCDC88A and inhibition of its guanine nucleotide exchange factor activity. Interacts with CD28. Requires Mg(2+) as cofactor. Autophosphorylation at Thr-219 is required for targeting to the TCR and cellular function of PRKCQ upon antigen receptor ligation. Following TCR stimulation, phosphorylated at Tyr-90 and Ser-685. As to expression, T-lymphocytes and skeletal muscle.

It is found in the cytoplasm. The protein localises to the cell membrane. The enzyme catalyses L-seryl-[protein] + ATP = O-phospho-L-seryl-[protein] + ADP + H(+). It carries out the reaction L-threonyl-[protein] + ATP = O-phospho-L-threonyl-[protein] + ADP + H(+). Its activity is regulated as follows. Novel PKCs (PRKCD, PRKCE, PRKCH and PRKCQ) are calcium-insensitive, but activated by diacylglycerol (DAG) and phosphatidylserine. Three specific sites; Thr-538 (activation loop of the kinase domain), Ser-676 (turn motif) and Ser-695 (hydrophobic region), need to be phosphorylated for its full activation. In terms of biological role, calcium-independent, phospholipid- and diacylglycerol (DAG)-dependent serine/threonine-protein kinase that mediates non-redundant functions in T-cell receptor (TCR) signaling, including T-cells activation, proliferation, differentiation and survival, by mediating activation of multiple transcription factors such as NF-kappa-B, JUN, NFATC1 and NFATC2. In TCR-CD3/CD28-co-stimulated T-cells, is required for the activation of NF-kappa-B and JUN, which in turn are essential for IL2 production, and participates in the calcium-dependent NFATC1 and NFATC2 transactivation. Mediates the activation of the canonical NF-kappa-B pathway (NFKB1) by direct phosphorylation of CARD11 on several serine residues, inducing CARD11 association with lipid rafts and recruitment of the BCL10-MALT1 complex, which then activates IKK complex, resulting in nuclear translocation and activation of NFKB1. May also play an indirect role in activation of the non-canonical NF-kappa-B (NFKB2) pathway. In the signaling pathway leading to JUN activation, acts by phosphorylating the mediator STK39/SPAK and may not act through MAP kinases signaling. Plays a critical role in TCR/CD28-induced NFATC1 and NFATC2 transactivation by participating in the regulation of reduced inositol 1,4,5-trisphosphate generation and intracellular calcium mobilization. After costimulation of T-cells through CD28 can phosphorylate CBLB and is required for the ubiquitination and subsequent degradation of CBLB, which is a prerequisite for the activation of TCR. During T-cells differentiation, plays an important role in the development of T-helper 2 (Th2) cells following immune and inflammatory responses, and, in the development of inflammatory autoimmune diseases, is necessary for the activation of IL17-producing Th17 cells. May play a minor role in Th1 response. Upon TCR stimulation, mediates T-cell protective survival signal by phosphorylating BAD, thus protecting T-cells from BAD-induced apoptosis, and by up-regulating BCL-X(L)/BCL2L1 levels through NF-kappa-B and JUN pathways. In platelets, regulates signal transduction downstream of the ITGA2B, CD36/GP4, F2R/PAR1 and F2RL3/PAR4 receptors, playing a positive role in 'outside-in' signaling and granule secretion signal transduction. May relay signals from the activated ITGA2B receptor by regulating the uncoupling of WASP and WIPF1, thereby permitting the regulation of actin filament nucleation and branching activity of the Arp2/3 complex. May mediate inhibitory effects of free fatty acids on insulin signaling by phosphorylating IRS1, which in turn blocks IRS1 tyrosine phosphorylation and downstream activation of the PI3K/AKT pathway. Phosphorylates MSN (moesin) in the presence of phosphatidylglycerol or phosphatidylinositol. Phosphorylates PDPK1 at 'Ser-504' and 'Ser-532' and negatively regulates its ability to phosphorylate PKB/AKT1. Phosphorylates CCDC88A/GIV and inhibits its guanine nucleotide exchange factor activity. Phosphorylates and activates LRRK1, which phosphorylates RAB proteins involved in intracellular trafficking. The polypeptide is Protein kinase C theta type (Prkcq) (Mus musculus (Mouse)).